Here is a 1348-residue protein sequence, read N- to C-terminus: Vascular endothelial growth factor receptor 2 (1348 aa).

The first 20 residues, 1 to 20 (MELGPLRVLTVLLCLAPVFA), serve as a signal peptide directing secretion. Topologically, residues 21–756 (GLFISMDQPT…GAEEKTNLEL (736 aa)) are extracellular. 20 N-linked (GlcNAc...) asparagine glycosylation sites follow: asparagine 43, asparagine 47, asparagine 63, asparagine 93, asparagine 138, asparagine 153, asparagine 201, asparagine 240, asparagine 290, asparagine 310, asparagine 365, asparagine 386, asparagine 513, asparagine 556, asparagine 603, asparagine 613, asparagine 622, asparagine 666, asparagine 688, and asparagine 710. Ig-like C2-type domains are found at residues 43-106 (NDTL…GDSQ), 138-202 (NKTV…IDNE), 220-312 (DLTM…KNSS), 320-405 (PFIH…HTFT), 412-534 (PQIG…RVIS), 540-651 (GLEI…KHLT), and 658-744 (PRLV…AFFS). Cysteine 50 and cysteine 100 are disulfide-bonded. An intrachain disulfide couples cysteine 145 to cysteine 195. Cysteine 241 and cysteine 299 are disulfide-bonded. Cysteine 436 and cysteine 520 form a disulfide bridge. A disulfide bridge links cysteine 561 with cysteine 633. The cysteines at positions 679 and 728 are disulfide-linked. A helical transmembrane segment spans residues 757-777 (IILVGTAVIAMFFWLLLVIIL). Residues 778–1348 (RTVKRANGGD…SPAPVASLPL (571 aa)) are Cytoplasmic-facing. Residues 825-1155 (LKLGKPLGRG…FSELVEHLGN (331 aa)) form the Protein kinase domain. ATP contacts are provided by residues 831–839 (LGRGAFGQV) and lysine 859. Residues 958 to 967 (ITSSQSSTSS) show a composition bias toward low complexity. The disordered stretch occupies residues 958–983 (ITSSQSSTSSGFVEERSLSDVEEEDA). Aspartate 1021 serves as the catalytic Proton acceptor. A phosphotyrosine; by autocatalysis mark is found at tyrosine 1047, tyrosine 1052, tyrosine 1168, and tyrosine 1207. Residues 1280–1302 (PSKSNESVMSEASNQTSGYQSGY) are disordered.

It belongs to the protein kinase superfamily. Tyr protein kinase family. CSF-1/PDGF receptor subfamily. Autophosphorylated on tyrosine residues upon ligand binding. Autophosphorylation occurs in trans, i.e. one subunit of the dimeric receptor phosphorylates tyrosine residues on the other subunit. As to expression, in all endothelial tissues during onset of vascularization. In later development, present in lung, heart, intestine and skin.

The protein localises to the cell membrane. The protein resides in the cytoplasmic vesicle. It localises to the early endosome. It is found in the cell junction. Its subcellular location is the endoplasmic reticulum. The catalysed reaction is L-tyrosyl-[protein] + ATP = O-phospho-L-tyrosyl-[protein] + ADP + H(+). Its activity is regulated as follows. Present in an inactive conformation in the absence of bound ligand. Binding of VEGFA, VEGFC or VEGFD leads to dimerization and activation by autophosphorylation on tyrosine residues. Functionally, tyrosine-protein kinase that acts as a cell-surface receptor for VEGFA, VEGFC and/or VEGFD and plays an essential role in the regulation of angiogenesis and vascular development. Promotes proliferation, survival, migration and differentiation of endothelial cells. Promotes reorganization of the actin cytoskeleton. Binding of vascular growth factors leads to the activation of several signaling cascades. Activation of PLCG1 leads to the production of the cellular signaling molecules diacylglycerol and inositol 1,4,5-trisphosphate and the activation of protein kinase C. Mediates activation of MAPK1/ERK2, MAPK3/ERK1 and the MAP kinase signaling pathway, as well as of the AKT1 signaling pathway. Mediates phosphorylation of PIK3R1, the regulatory subunit of phosphatidylinositol 3-kinase, reorganization of the actin cytoskeleton and activation of PTK2/FAK1. Required for VEGFA-mediated induction of NOS2 and NOS3, leading to the production of the signaling molecule nitric oxide (NO) by endothelial cells. The sequence is that of Vascular endothelial growth factor receptor 2 from Coturnix japonica (Japanese quail).